Reading from the N-terminus, the 170-residue chain is Protein-export protein SecB (170 aa).

It belongs to the SecB family. Homotetramer, a dimer of dimers. One homotetramer interacts with 1 SecA dimer.

It localises to the cytoplasm. One of the proteins required for the normal export of preproteins out of the cell cytoplasm. It is a molecular chaperone that binds to a subset of precursor proteins, maintaining them in a translocation-competent state. It also specifically binds to its receptor SecA. This Pasteurella multocida (strain Pm70) protein is Protein-export protein SecB.